Consider the following 603-residue polypeptide: Glutathione-regulated potassium-efflux system protein KefB (603 aa).

13 helical membrane passes run 4 to 24 (SDFLLAGVLFLFAAVAAVPLA), 29 to 49 (IGAVLGYLLAGIAIGPWGLGF), 55 to 75 (EILHFSELGVVFLMFIIGLEL), 87 to 107 (IFGVGAAQVLLSAALLAGLLM), 115 to 135 (AAVVGGIGLAMSSTAMALQLM), 152 to 172 (VLLFQDLAVIPALALVPLLAG), 177 to 197 (HFDWMKIGMKVLAFVGMLIGG), 207 to 227 (FIAASGVREVFTAATLLLVLG), 230 to 250 (LFMDALGLSMALGTFIAGVLL), 268 to 288 (GLLLGLFFISVGMSLNLGVLY), 291 to 311 (LLWVVISVVVLVAVKILVLYL), 324 to 344 (MQFAGVLSQGGEFAFVLFSTA), and 355 to 375 (MALLLVTVTVTLSMMTTPLLM). Positions 402–521 (KPQVIVVGFG…AGVTQFSRET (120 aa)) constitute an RCK N-terminal domain.

It belongs to the monovalent cation:proton antiporter 2 (CPA2) transporter (TC 2.A.37) family. KefB subfamily. In terms of assembly, interacts with the regulatory subunit KefG.

The protein localises to the cell inner membrane. Its function is as follows. Pore-forming subunit of a potassium efflux system that confers protection against electrophiles. Catalyzes K(+)/H(+) antiport. This is Glutathione-regulated potassium-efflux system protein KefB from Shigella boydii serotype 4 (strain Sb227).